The following is a 336-amino-acid chain: Large ribosomal subunit protein uL1 (336 aa).

Positions 1–245 (MANQKKVTNK…VKKTAKGKVI (245 aa)) are large ribosomal subunit protein uL1. Positions 246–336 (ADDSAKGENK…DVKKAKTSKK (91 aa)) are unknown. The tract at residues 267 to 336 (AQKKKPSKHP…DVKKAKTSKK (70 aa)) is disordered. The segment covering 286-305 (KKKKVKKILKKAKPAKKAAV) has biased composition (basic residues). Over residues 306 to 315 (AKKPVVVNKK) the composition is skewed to low complexity.

The protein belongs to the universal ribosomal protein uL1 family. Part of the 50S ribosomal subunit.

Its function is as follows. Binds directly to 23S rRNA. The L1 stalk is quite mobile in the ribosome, and is involved in E site tRNA release. Functionally, protein L1 is also a translational repressor protein, it controls the translation of the L11 operon by binding to its mRNA. In Malacoplasma penetrans (strain HF-2) (Mycoplasma penetrans), this protein is Large ribosomal subunit protein uL1.